A 250-amino-acid chain; its full sequence is Phosphoribosylaminoimidazole-succinocarboxamide synthase (250 aa).

It belongs to the SAICAR synthetase family.

The enzyme catalyses 5-amino-1-(5-phospho-D-ribosyl)imidazole-4-carboxylate + L-aspartate + ATP = (2S)-2-[5-amino-1-(5-phospho-beta-D-ribosyl)imidazole-4-carboxamido]succinate + ADP + phosphate + 2 H(+). The protein operates within purine metabolism; IMP biosynthesis via de novo pathway; 5-amino-1-(5-phospho-D-ribosyl)imidazole-4-carboxamide from 5-amino-1-(5-phospho-D-ribosyl)imidazole-4-carboxylate: step 1/2. The polypeptide is Phosphoribosylaminoimidazole-succinocarboxamide synthase (Bifidobacterium longum subsp. infantis (strain ATCC 15697 / DSM 20088 / JCM 1222 / NCTC 11817 / S12)).